Consider the following 287-residue polypeptide: Inorganic pyrophosphatase (287 aa).

Arg79 contributes to the diphosphate binding site. Residues Asp116, Asp121, and Asp153 each coordinate Mg(2+).

This sequence belongs to the PPase family. It depends on Mg(2+) as a cofactor.

The protein localises to the cytoplasm. It carries out the reaction diphosphate + H2O = 2 phosphate + H(+). This Eremothecium gossypii (strain ATCC 10895 / CBS 109.51 / FGSC 9923 / NRRL Y-1056) (Yeast) protein is Inorganic pyrophosphatase (IPP1).